Consider the following 144-residue polypeptide: Probable transcription termination protein NusA (144 aa).

Residues 101–144 (RTDIVVGVKPEEIGKVIGKEGKNIKLFKDAVSRYFNVNSISVKQ) form the KH domain.

The protein belongs to the NusA family.

The protein resides in the cytoplasm. In terms of biological role, participates in transcription termination. This chain is Probable transcription termination protein NusA, found in Thermoplasma acidophilum (strain ATCC 25905 / DSM 1728 / JCM 9062 / NBRC 15155 / AMRC-C165).